We begin with the raw amino-acid sequence, 292 residues long: ATP synthase gamma chain (292 aa).

This sequence belongs to the ATPase gamma chain family. In terms of assembly, F-type ATPases have 2 components, CF(1) - the catalytic core - and CF(0) - the membrane proton channel. CF(1) has five subunits: alpha(3), beta(3), gamma(1), delta(1), epsilon(1). CF(0) has three main subunits: a, b and c.

It localises to the cell inner membrane. In terms of biological role, produces ATP from ADP in the presence of a proton gradient across the membrane. The gamma chain is believed to be important in regulating ATPase activity and the flow of protons through the CF(0) complex. The protein is ATP synthase gamma chain of Nitrobacter winogradskyi (strain ATCC 25391 / DSM 10237 / CIP 104748 / NCIMB 11846 / Nb-255).